Consider the following 117-residue polypeptide: Probable non-functional immunoglobulin kappa variable 1D-42 (117 aa).

The N-terminal stretch at 1–22 is a signal peptide; that stretch reads MDMRVPAQLLGLLLLWLPGVRF. Positions 23 to 45 are framework-1; it reads DIQMTQSPSFLSASVGDRVSIIC. Residues 23 to 117 enclose the Ig-like domain; that stretch reads DIQMTQSPSF…YYCKQDFSYP (95 aa). A disulfide bridge connects residues Cys-45 and Cys-110. The complementarity-determining-1 stretch occupies residues 46–56; it reads WASEGISSNLA. The tract at residues 57–71 is framework-2; it reads WYLQKPGKSPKLFLY. Residues 72-78 form a complementarity-determining-2 region; that stretch reads DAKDLHP. The interval 79–110 is framework-3; it reads GVSSRFSGRGSGTDFTLTIISLKPEDFAAYYC. A complementarity-determining-3 region spans residues 111–117; that stretch reads KQDFSYP.

Immunoglobulins are composed of two identical heavy chains and two identical light chains; disulfide-linked.

The protein localises to the secreted. Its subcellular location is the cell membrane. Functionally, probable non-functional open reading frame (ORF) of V region of the variable domain of immunoglobulin light chains. Non-functional ORF generally cannot participate in the synthesis of a productive immunoglobulin chain due to altered V-(D)-J or switch recombination and/or splicing site (at mRNA level) and/or conserved amino acid change (protein level). Immunoglobulins, also known as antibodies, are membrane-bound or secreted glycoproteins produced by B lymphocytes. In the recognition phase of humoral immunity, the membrane-bound immunoglobulins serve as receptors which, upon binding of a specific antigen, trigger the clonal expansion and differentiation of B lymphocytes into immunoglobulins-secreting plasma cells. Secreted immunoglobulins mediate the effector phase of humoral immunity, which results in the elimination of bound antigens. The antigen binding site is formed by the variable domain of one heavy chain, together with that of its associated light chain. Thus, each immunoglobulin has two antigen binding sites with remarkable affinity for a particular antigen. The variable domains are assembled by a process called V-(D)-J rearrangement and can then be subjected to somatic hypermutations which, after exposure to antigen and selection, allow affinity maturation for a particular antigen. The chain is Probable non-functional immunoglobulin kappa variable 1D-42 from Homo sapiens (Human).